Reading from the N-terminus, the 354-residue chain is Long form salivary protein D7L3 (354 aa).

The first 26 residues, 1 to 26 (MQLTPRSVHLVHLLLAATTLISPSWS), serve as a signal peptide directing secretion.

Belongs to the PBP/GOBP family.

The protein localises to the secreted. Modulates blood feeding of female mosquitoes on vertebrate species by binding and sequestering different mediators involved in the host response. Binds serotonin with high affinity. Binds weakly noradrenaline and histamine. Does not bind tryptamine, octopamine, dopamine, adrenaline, leukotriene C4, leukotriene D4, leukotriene B4, ADP and U-46619, a stable analog of thromboxane A2. Inhibits agonist-induced platelet aggregation. Exhibits vasodilating activity. This Anopheles gambiae (African malaria mosquito) protein is Long form salivary protein D7L3.